Reading from the N-terminus, the 143-residue chain is Flagellar assembly factor FliW (143 aa).

This sequence belongs to the FliW family. As to quaternary structure, interacts with translational regulator CsrA and flagellin(s).

It is found in the cytoplasm. In terms of biological role, acts as an anti-CsrA protein, binds CsrA and prevents it from repressing translation of its target genes, one of which is flagellin. Binds to flagellin and participates in the assembly of the flagellum. The sequence is that of Flagellar assembly factor FliW from Clostridium botulinum (strain ATCC 19397 / Type A).